The chain runs to 86 residues: HssA/B-like protein 60 (86 aa).

Residues 11–33 (GNIKSSSKSNIASSSSSSSSQSL) form a disordered region.

It belongs to the hssA/B family.

This chain is HssA/B-like protein 60 (hssl60), found in Dictyostelium discoideum (Social amoeba).